We begin with the raw amino-acid sequence, 318 residues long: Protein-methionine-sulfoxide reductase catalytic subunit MsrP (318 aa).

The tat-type signal signal peptide spans 1–40; that stretch reads MNRFTRYDVTPEVIFNQRRQIIKAMGLGAAALSLPNIGFA. Residues N72, 75 to 76, C130, T165, N217, R222, and 233 to 235 each bind Mo-molybdopterin; these read YE and SIK.

It belongs to the MsrP family. Heterodimer of a catalytic subunit (MsrP) and a heme-binding subunit (MsrQ). It depends on Mo-molybdopterin as a cofactor. Post-translationally, predicted to be exported by the Tat system. The position of the signal peptide cleavage has not been experimentally proven.

It is found in the periplasm. It carries out the reaction L-methionyl-[protein] + a quinone + H2O = L-methionyl-(S)-S-oxide-[protein] + a quinol. The catalysed reaction is L-methionyl-[protein] + a quinone + H2O = L-methionyl-(R)-S-oxide-[protein] + a quinol. Functionally, part of the MsrPQ system that repairs oxidized periplasmic proteins containing methionine sulfoxide residues (Met-O), using respiratory chain electrons. Thus protects these proteins from oxidative-stress damage caused by reactive species of oxygen and chlorine generated by the host defense mechanisms. MsrPQ is essential for the maintenance of envelope integrity under bleach stress, rescuing a wide series of structurally unrelated periplasmic proteins from methionine oxidation. The catalytic subunit MsrP is non-stereospecific, being able to reduce both (R-) and (S-) diastereoisomers of methionine sulfoxide. This is Protein-methionine-sulfoxide reductase catalytic subunit MsrP from Actinobacillus pleuropneumoniae serotype 3 (strain JL03).